Here is an 875-residue protein sequence, read N- to C-terminus: MSLIPITFYFLFLFFSNFRGVFAVPNIHLCHFEQRDALLEFKNEFKIKKPCFGCPSPLKTKSWENGSDCCHWDGITCDAKTGEVIEIDLMCSCLHGWFHSNSNLSMLQNFHFLTTLDLSYNHLSGQISSSIGNLSHLTTLDLSGNNFSGWIPSSLGNLFHLTSLHLYDNNFGGEIPSSLGNLSYLTFLDLSTNNFVGEIPSSFGSLNQLSILRLDNNKLSGNLPLEVINLTKLSEISLSHNQFTGTLPPNITSLSILESFSASGNNFVGTIPSSLFTIPSITLIFLDNNQLSGTLEFGNISSPSNLLVLQLGGNNLRGPIPTSISRLVNLRTLDLSHFNIQGQVDFNIFSHLKLLGNLYLSHSNTTTTIDLNAVLSCFKMLISLDLSGNHVLVTNKSSVSDPPLGLIGSLNLSGCGITEFPDILRTQRQMRTLDISNNKIKGQVPSWLLLQLEYMHISNNNFIGFERSTKLEKTVVPKPSMKHFFGSNNNFSGKIPSFICSLRSLIILDLSNNNFSGAIPPCVGKFKSTLSDLNLRRNRLSGSLPKTIIKSLRSLDVSHNELEGKLPRSLIHFSTLEVLNVESNRINDTFPFWLSSLKKLQVLVLRSNAFHGRIHKTRFPKLRIIDISRNHFNGTLPSDCFVEWTGMHSLEKNEDRFNEKYMGSGYYHDSMVLMNKGLEMELVRILKIYTALDFSGNKFEGEIPRSIGLLKELHILNLSSNGFTGHIPSSMGNLRELESLDVSRNKLSGEIPQELGNLSYLAYMNFSHNQLVGQVPGGTQFRTQSASSFEENLGLCGRPLEECRVVHEPTPSGESETLESEQVLSWIAAAIGFTPGIVLGLTIGHIVLSSKPRWFFKVLYINNSRRRRRTRSEKS.

A signal peptide spans 1–23 (MSLIPITFYFLFLFFSNFRGVFA). The Extracellular portion of the chain corresponds to 24–822 (VPNIHLCHFE…GESETLESEQ (799 aa)). Asn-65, Asn-103, Asn-133, Asn-146, and Asn-181 each carry an N-linked (GlcNAc...) asparagine glycan. 10 LRR repeats span residues 110–133 (FHFLTTLDLSYNHLSGQISSSIGN), 134–157 (LSHLTTLDLSGNNFSGWIPSSLGN), 159–182 (FHLTSLHLYDNNFGGEIPSSLGNL), 183–205 (SYLTFLDLSTNNFVGEIPSSFGS), 206–230 (LNQLSILRLDNNKLSGNLPLEVINL), 231–254 (TKLSEISLSHNQFTGTLPPNITSL), 256–278 (ILESFSASGNNFVGTIPSSLFTI), 280–302 (SITLIFLDNNQLSGTLEFGNISS), 303–327 (PSNLLVLQLGGNNLRGPIPTSISRL), and 329–351 (NLRTLDLSHFNIQGQVDFNIFSH). 2 N-linked (GlcNAc...) asparagine glycosylation sites follow: Asn-229 and Asn-250. Asn-299 is a glycosylation site (N-linked (GlcNAc...) asparagine). The stretch at 352 to 377 (LKLLGNLYLSHSNTTTTIDLNAVLSC) is one LRR 11; degenerate repeat. 3 N-linked (GlcNAc...) asparagine glycosylation sites follow: Asn-364, Asn-395, and Asn-411. LRR repeat units lie at residues 378–401 (FKMLISLDLSGNHVLVTNKSSVSD), 404–427 (LGLIGSLNLSGCGITEFPDILRTQ), 428–451 (RQMRTLDISNNKIKGQVPSWLLLQ), 455–477 (MHISNNNFIGFERSTKLEKTVVP), 479–502 (PSMKHFFGSNNNFSGKIPSFICSL), 503–528 (RSLIILDLSNNNFSGAIPPCVGKFKS), 530–549 (LSDLNLRRNRLSGSLPKTII), 550–573 (KSLRSLDVSHNELEGKLPRSLIHF), 575–596 (TLEVLNVESNRINDTFPFWLSS), 597–619 (LKKLQVLVLRSNAFHGRIHKTRF), 620–643 (PKLRIIDISRNHFNGTLPSDCFVE), 686–710 (LKIYTALDFSGNKFEGEIPRSIGLL), 711–734 (KELHILNLSSNGFTGHIPSSMGNL), 735–758 (RELESLDVSRNKLSGEIPQELGNL), and 760–783 (YLAYMNFSHNQLVGQVPGGTQFRT). N-linked (GlcNAc...) asparagine glycans are attached at residues Asn-490 and Asn-514. Asn-587 carries an N-linked (GlcNAc...) asparagine glycan. The N-linked (GlcNAc...) asparagine glycan is linked to Asn-633. N-linked (GlcNAc...) asparagine glycans are attached at residues Asn-717, Asn-757, and Asn-765. Residues 823 to 843 (VLSWIAAAIGFTPGIVLGLTI) form a helical membrane-spanning segment. The Cytoplasmic portion of the chain corresponds to 844-875 (GHIVLSSKPRWFFKVLYINNSRRRRRTRSEKS).

This sequence belongs to the RLP family.

The protein resides in the cell membrane. This is Receptor-like protein 33 from Arabidopsis thaliana (Mouse-ear cress).